Consider the following 316-residue polypeptide: Ribose-phosphate pyrophosphokinase (316 aa).

Residues 42-44 and 101-102 each bind ATP; these read DGE and RQ. Mg(2+) contacts are provided by His-135 and Asp-174. The active site involves Lys-197. Residues Arg-199, Asp-223, and 227–231 each bind D-ribose 5-phosphate; that span reads DTAGT.

Belongs to the ribose-phosphate pyrophosphokinase family. Class I subfamily. In terms of assembly, homohexamer. Mg(2+) serves as cofactor.

The protein resides in the cytoplasm. The enzyme catalyses D-ribose 5-phosphate + ATP = 5-phospho-alpha-D-ribose 1-diphosphate + AMP + H(+). The protein operates within metabolic intermediate biosynthesis; 5-phospho-alpha-D-ribose 1-diphosphate biosynthesis; 5-phospho-alpha-D-ribose 1-diphosphate from D-ribose 5-phosphate (route I): step 1/1. Involved in the biosynthesis of the central metabolite phospho-alpha-D-ribosyl-1-pyrophosphate (PRPP) via the transfer of pyrophosphoryl group from ATP to 1-hydroxyl of ribose-5-phosphate (Rib-5-P). This Halalkalibacterium halodurans (strain ATCC BAA-125 / DSM 18197 / FERM 7344 / JCM 9153 / C-125) (Bacillus halodurans) protein is Ribose-phosphate pyrophosphokinase.